Here is a 537-residue protein sequence, read N- to C-terminus: Probable protein kinase UbiB (537 aa).

Residues 24–44 (LLFEQPLLPWWLASLRLLMPW) form a helical membrane-spanning segment. The region spanning 126–494 (RFDVEPLASA…RRRQGDNWAL (369 aa)) is the Protein kinase domain. Residues 132–140 (LASASVAQV) and K154 each bind ATP. The active-site Proton acceptor is D289. 2 consecutive transmembrane segments (helical) span residues 493–513 (ALRL…AGAV) and 515–535 (LSAP…YLIV).

This sequence belongs to the ABC1 family. UbiB subfamily.

It localises to the cell inner membrane. It functions in the pathway cofactor biosynthesis; ubiquinone biosynthesis [regulation]. Functionally, is probably a protein kinase regulator of UbiI activity which is involved in aerobic coenzyme Q (ubiquinone) biosynthesis. The protein is Probable protein kinase UbiB of Pseudomonas entomophila (strain L48).